A 178-amino-acid polypeptide reads, in one-letter code: MSRIGKAPIEIPAGVEVTVEGNLVRVKGPKGELSREIHPAMSITIENGALRVSRPSDEREHKALHGLTRTLIANMVEGVTKGYSKTLELVGTGYRAAKTGNQLTLSVGYSHPVVFNPPPGIEFQVPAPNQVIVAGIDKQLVGQVAADIRATRPPEPYLGKGIKYAGEHIRRKVGKAGK.

The protein belongs to the universal ribosomal protein uL6 family. As to quaternary structure, part of the 50S ribosomal subunit.

This protein binds to the 23S rRNA, and is important in its secondary structure. It is located near the subunit interface in the base of the L7/L12 stalk, and near the tRNA binding site of the peptidyltransferase center. The polypeptide is Large ribosomal subunit protein uL6 (Symbiobacterium thermophilum (strain DSM 24528 / JCM 14929 / IAM 14863 / T)).